Consider the following 252-residue polypeptide: 5'-nucleotidase SurE (252 aa).

A divalent metal cation is bound by residues aspartate 8, aspartate 9, serine 39, and asparagine 95.

The protein belongs to the SurE nucleotidase family. A divalent metal cation serves as cofactor.

It localises to the cytoplasm. The catalysed reaction is a ribonucleoside 5'-phosphate + H2O = a ribonucleoside + phosphate. In terms of biological role, nucleotidase that shows phosphatase activity on nucleoside 5'-monophosphates. This is 5'-nucleotidase SurE from Clostridium botulinum (strain Okra / Type B1).